A 233-amino-acid chain; its full sequence is Low affinity immunoglobulin gamma Fc region receptor III-B (233 aa).

The signal sequence occupies residues 1-16 (MWQLLLPTALLLLVSA). 2 Ig-like C2-type domains span residues 40–96 (KDSV…LSTL) and 121–179 (EDPI…VGSK). The cysteines at positions 47 and 89 are disulfide-linked. 4 N-linked (GlcNAc...) asparagine glycosylation sites follow: asparagine 56, asparagine 63, asparagine 82, and asparagine 92. The cysteines at positions 128 and 172 are disulfide-linked. Asparagine 180 and asparagine 187 each carry an N-linked (GlcNAc...) asparagine glycan. The GPI-anchor amidated serine moiety is linked to residue serine 200. A propeptide spans 201–233 (SFSPPGYQVSFCLVMVLLFAVDTGLYFSVKTNI) (removed in mature form).

In terms of assembly, monomer. Interacts with INPP5D/SHIP1. Post-translationally, glycosylated. Glycosylation plays an inhibitory role in the interaction with IgG3. In terms of processing, the soluble form is produced by a proteolytic cleavage. In terms of tissue distribution, expressed specifically by polymorphonuclear leukocytes (neutrophils). Also expressed by stimulated eosinophils.

The protein resides in the cell membrane. It localises to the secreted. Receptor for the Fc region of immunoglobulins gamma. Low affinity receptor. Binds complexed or aggregated IgG and also monomeric IgG. Contrary to III-A, is not capable to mediate antibody-dependent cytotoxicity and phagocytosis. May serve as a trap for immune complexes in the peripheral circulation which does not activate neutrophils. This is Low affinity immunoglobulin gamma Fc region receptor III-B (FCGR3B) from Homo sapiens (Human).